The following is a 276-amino-acid chain: Large ribosomal subunit protein uL2 (276 aa).

The tract at residues 225–276 is disordered; the sequence is MNPNDHPHGGGEGRNPIGRNPVTPWGKPALGAKTRKKKNPSNRFIVKRRGKK. Positions 257–276 are enriched in basic residues; that stretch reads KTRKKKNPSNRFIVKRRGKK.

Belongs to the universal ribosomal protein uL2 family. As to quaternary structure, part of the 50S ribosomal subunit. Forms a bridge to the 30S subunit in the 70S ribosome.

Functionally, one of the primary rRNA binding proteins. Required for association of the 30S and 50S subunits to form the 70S ribosome, for tRNA binding and peptide bond formation. It has been suggested to have peptidyltransferase activity; this is somewhat controversial. Makes several contacts with the 16S rRNA in the 70S ribosome. The protein is Large ribosomal subunit protein uL2 of Desulfitobacterium hafniense (strain DSM 10664 / DCB-2).